The following is a 387-amino-acid chain: Probable peptidoglycan glycosyltransferase FtsW (387 aa).

Helical transmembrane passes span 20 to 40 (LYLL…VGSA), 61 to 81 (LFLL…LAFW), 86 to 106 (PVML…GIGV), 149 to 169 (TIRG…LLLL), 172 to 192 (DFGA…LGGA), 194 to 214 (LWHF…LAWY), 284 to 304 (LMGS…VLLI), 322 to 342 (GLGI…MGVL), and 349 to 369 (LPLM…VALI).

It belongs to the SEDS family. FtsW subfamily.

Its subcellular location is the cell inner membrane. It catalyses the reaction [GlcNAc-(1-&gt;4)-Mur2Ac(oyl-L-Ala-gamma-D-Glu-L-Lys-D-Ala-D-Ala)](n)-di-trans,octa-cis-undecaprenyl diphosphate + beta-D-GlcNAc-(1-&gt;4)-Mur2Ac(oyl-L-Ala-gamma-D-Glu-L-Lys-D-Ala-D-Ala)-di-trans,octa-cis-undecaprenyl diphosphate = [GlcNAc-(1-&gt;4)-Mur2Ac(oyl-L-Ala-gamma-D-Glu-L-Lys-D-Ala-D-Ala)](n+1)-di-trans,octa-cis-undecaprenyl diphosphate + di-trans,octa-cis-undecaprenyl diphosphate + H(+). It participates in cell wall biogenesis; peptidoglycan biosynthesis. In terms of biological role, peptidoglycan polymerase that is essential for cell division. The sequence is that of Probable peptidoglycan glycosyltransferase FtsW from Nitrosococcus halophilus (strain Nc4).